The following is a 182-amino-acid chain: Adenine phosphoribosyltransferase (182 aa).

The protein belongs to the purine/pyrimidine phosphoribosyltransferase family. Homodimer.

Its subcellular location is the cytoplasm. It catalyses the reaction AMP + diphosphate = 5-phospho-alpha-D-ribose 1-diphosphate + adenine. It participates in purine metabolism; AMP biosynthesis via salvage pathway; AMP from adenine: step 1/1. In terms of biological role, catalyzes a salvage reaction resulting in the formation of AMP, that is energically less costly than de novo synthesis. The sequence is that of Adenine phosphoribosyltransferase from Campylobacter concisus (strain 13826).